Consider the following 247-residue polypeptide: DNA polymerase sliding clamp (247 aa).

The protein belongs to the PCNA family. Homotrimer. The subunits circularize to form a toroid; DNA passes through its center. Replication factor C (RFC) is required to load the toroid on the DNA.

Sliding clamp subunit that acts as a moving platform for DNA processing. Responsible for tethering the catalytic subunit of DNA polymerase and other proteins to DNA during high-speed replication. In Methanospirillum hungatei JF-1 (strain ATCC 27890 / DSM 864 / NBRC 100397 / JF-1), this protein is DNA polymerase sliding clamp.